An 821-amino-acid polypeptide reads, in one-letter code: G-type lectin S-receptor-like serine/threonine-protein kinase SD2-5 (821 aa).

The signal sequence occupies residues Met-1–Ala-21. Residues Gly-22–Pro-429 are Extracellular-facing. Positions Phe-33–Asp-148 constitute a Bulb-type lectin domain. 4 N-linked (GlcNAc...) asparagine glycosylation sites follow: Asn-51, Asn-121, Asn-174, and Asn-248. The EGF-like; atypical domain occupies Pro-280–Asp-314. Cystine bridges form between Cys-284–Cys-296 and Cys-290–Cys-302. In terms of domain architecture, PAN spans Cys-323–Ala-411. Residues Asn-329, Asn-370, and Asn-380 are each glycosylated (N-linked (GlcNAc...) asparagine). Disulfide bonds link Cys-363–Cys-385 and Cys-367–Cys-373. A helical membrane pass occupies residues Tyr-430–Phe-450. Over Arg-451–Arg-821 the chain is Cytoplasmic. One can recognise a Protein kinase domain in the interval Asn-493 to Phe-768. Residues Leu-499–Val-507 and Lys-521 each bind ATP. Residues Lys-581–Thr-599 form a caM-binding region. The active-site Proton acceptor is the Asp-618. Position 635 is a phosphoserine (Ser-635). Position 652 is a phosphothreonine (Thr-652).

This sequence belongs to the protein kinase superfamily. Ser/Thr protein kinase family. As to quaternary structure, interacts with PUB9, PUB13, PUB14 and PUB29.

It is found in the membrane. It carries out the reaction L-seryl-[protein] + ATP = O-phospho-L-seryl-[protein] + ADP + H(+). It catalyses the reaction L-threonyl-[protein] + ATP = O-phospho-L-threonyl-[protein] + ADP + H(+). The chain is G-type lectin S-receptor-like serine/threonine-protein kinase SD2-5 (SD25) from Arabidopsis thaliana (Mouse-ear cress).